The sequence spans 267 residues: 4-hydroxy-tetrahydrodipicolinate reductase (267 aa).

10–15 (GANGRM) is an NAD(+) binding site. An NADP(+)-binding site is contributed by R37. Residues 98–100 (GTT) and 122–125 (ARNY) contribute to the NAD(+) site. Residue H155 is the Proton donor/acceptor of the active site. (S)-2,3,4,5-tetrahydrodipicolinate is bound at residue H156. Residue K159 is the Proton donor of the active site. 165-166 (GT) serves as a coordination point for (S)-2,3,4,5-tetrahydrodipicolinate.

The protein belongs to the DapB family.

It is found in the cytoplasm. It catalyses the reaction (S)-2,3,4,5-tetrahydrodipicolinate + NAD(+) + H2O = (2S,4S)-4-hydroxy-2,3,4,5-tetrahydrodipicolinate + NADH + H(+). It carries out the reaction (S)-2,3,4,5-tetrahydrodipicolinate + NADP(+) + H2O = (2S,4S)-4-hydroxy-2,3,4,5-tetrahydrodipicolinate + NADPH + H(+). It participates in amino-acid biosynthesis; L-lysine biosynthesis via DAP pathway; (S)-tetrahydrodipicolinate from L-aspartate: step 4/4. In terms of biological role, catalyzes the conversion of 4-hydroxy-tetrahydrodipicolinate (HTPA) to tetrahydrodipicolinate. This Pseudoalteromonas translucida (strain TAC 125) protein is 4-hydroxy-tetrahydrodipicolinate reductase.